Consider the following 84-residue polypeptide: MSSGGLLLLLGLLTLWAELTPISGQDRPKFCHLPVDSGICRAHIPRFYYNPASNQCQGFIYGGCGGNANNFETRDQCRHTCGGK.

An N-terminal signal peptide occupies residues 1–24 (MSSGGLLLLLGLLTLWAELTPISG). Gln25 carries the pyrrolidone carboxylic acid modification. Positions 31–81 (CHLPVDSGICRAHIPRFYYNPASNQCQGFIYGGCGGNANNFETRDQCRHTC) constitute a BPTI/Kunitz inhibitor domain. Disulfide bonds link Cys31/Cys81, Cys40/Cys64, and Cys56/Cys77.

This sequence belongs to the venom Kunitz-type family. In terms of tissue distribution, expressed by the venom gland.

It localises to the secreted. Its function is as follows. Serine protease inhibitor. In Daboia russelii (Russel's viper), this protein is Kunitz-type serine protease inhibitor 4.